A 66-amino-acid polypeptide reads, in one-letter code: Large ribosomal subunit protein uL29 (66 aa).

The protein belongs to the universal ribosomal protein uL29 family.

The polypeptide is Large ribosomal subunit protein uL29 (Geobacillus thermodenitrificans (strain NG80-2)).